Reading from the N-terminus, the 79-residue chain is Hematopoietic cell signal transducer (79 aa).

The signal sequence occupies residues 1–18; the sequence is MIHPGHILFLLLLPVAAA. Residues 19 to 34 are Extracellular-facing; that stretch reads QTTPGSCSGCGSLSLP. A helical membrane pass occupies residues 35-55; sequence LLAGLVAADAVASPLIVGAVF. At 56 to 79 the chain is on the cytoplasmic side; sequence LCARPRRSPAQGDGKVYINMPGRG. Tyr72 carries the phosphotyrosine modification. The GRB2 binding site stretch occupies residues 72–74; that stretch reads YIN. Positions 72 to 75 are PIK3R1 binding site; sequence YINM.

It belongs to the DAP10 family. As to quaternary structure, homodimer; Disulfide-linked. Heterohexamer composed of four subunits of HCST/DAP10 and two subunits of KLRK1. Interacts (via transmembrane domain) with KLRK1 (via transmembrane domain); the interaction is required for KLRK1 NK cell surface and induces NK cell-mediated cytotoxicity. Interacts with PIK3R1 and GRB2. Interacts with CLEC5A. Forms an CLEC5A/TYROBP/HCST trimolecular complex depending almost solely on TYROBP. Interacts with CD300H. Phosphorylated; PIK3R1 and GRB2 associate specifically with tyrosine-phosphorylated HCST. Post-translationally, O-glycosylated.

It localises to the membrane. Functionally, transmembrane adapter protein which associates with KLRK1 to form an activation receptor KLRK1-HCST in lymphoid and myeloid cells; this receptor plays a major role in triggering cytotoxicity against target cells expressing cell surface ligands such as MHC class I chain-related MICA and MICB, and UL16-binding proteins (ULBPs); these ligands are up-regulated by stress conditions and pathological state such as viral infection and tumor transformation. Functions as a docking site for PI3-kinase PIK3R1 and GRB2. Interaction of ULBPs with KLRK1-HCST triggers calcium mobilization and activation of the PIK3R1, MAP2K/ERK, and JAK2/STAT5 signaling pathways. Both PIK3R1 and GRB2 are required for full KLRK1-HCST-mediated activation and ultimate killing of target cells. In NK cells, KLRK1-HCST signaling directly induces cytotoxicity and enhances cytokine production initiated via DAP12/TYROBP-associated receptors. In T-cells, it provides primarily costimulation for TCR-induced signals. KLRK1-HCST receptor plays a role in immune surveillance against tumors and is required for cytolysis of tumors cells; indeed, melanoma cells that do not express KLRK1 ligands escape from immune surveillance mediated by NK cells. The chain is Hematopoietic cell signal transducer (HCST) from Macaca mulatta (Rhesus macaque).